A 370-amino-acid chain; its full sequence is GTPase Obg (370 aa).

Residues methionine 1–leucine 159 enclose the Obg domain. Positions leucine 128–glycine 147 are disordered. The OBG-type G domain occupies alanine 160 to serine 334. Residues glycine 166–serine 173, phenylalanine 191–alanine 195, aspartate 213–glycine 216, asparagine 284–aspartate 287, and serine 315–leucine 317 each bind GTP. Mg(2+) is bound by residues serine 173 and threonine 193.

It belongs to the TRAFAC class OBG-HflX-like GTPase superfamily. OBG GTPase family. As to quaternary structure, monomer. Requires Mg(2+) as cofactor.

It localises to the cytoplasm. Functionally, an essential GTPase which binds GTP, GDP and possibly (p)ppGpp with moderate affinity, with high nucleotide exchange rates and a fairly low GTP hydrolysis rate. Plays a role in control of the cell cycle, stress response, ribosome biogenesis and in those bacteria that undergo differentiation, in morphogenesis control. The protein is GTPase Obg of Burkholderia cenocepacia (strain ATCC BAA-245 / DSM 16553 / LMG 16656 / NCTC 13227 / J2315 / CF5610) (Burkholderia cepacia (strain J2315)).